The chain runs to 445 residues: Probable D-serine dehydratase (445 aa).

The residue at position 119 (K119) is an N6-(pyridoxal phosphate)lysine.

The protein belongs to the serine/threonine dehydratase family. DsdA subfamily. It depends on pyridoxal 5'-phosphate as a cofactor.

It catalyses the reaction D-serine = pyruvate + NH4(+). The protein is Probable D-serine dehydratase of Pseudomonas putida (strain GB-1).